We begin with the raw amino-acid sequence, 229 residues long: Molybdenum transport system permease protein ModB (229 aa).

At 1–16 (MILTDPEWQAVLLSLK) the chain is on the periplasmic side. The ABC transmembrane type-1 domain occupies 11 to 219 (VLLSLKVSSL…MISLLISEWL (209 aa)). A helical transmembrane segment spans residues 17–37 (VSSLAVLFSLPFGIFFAWLLV). The Cytoplasmic portion of the chain corresponds to 38–49 (RCTFPGKALLDS). Residues 50 to 70 (VLHLPLVLPPVVVGYLLLVSM) traverse the membrane as a helical segment. The Periplasmic segment spans residues 71 to 83 (GRRGFIGERLYDW). Residues 84-104 (FGITFAFSWRGAVLAAAVMSF) traverse the membrane as a helical segment. Residues 105–136 (PLMVRAIRLALEGVDVKLEQAARTLGAGRWRV) lie on the Cytoplasmic side of the membrane. The chain crosses the membrane as a helical span at residues 137 to 157 (FFTITLPLTLPGIIVGTVLAF). The Periplasmic segment spans residues 158–201 (ARSLGEFGATITFVSNIPGETRTIPSAMYTLIQTPGGESGAARL). The chain crosses the membrane as a helical span at residues 202 to 222 (CIISIALAMISLLISEWLARI). Residues 223–229 (SRERAGR) are Cytoplasmic-facing.

This sequence belongs to the binding-protein-dependent transport system permease family. CysTW subfamily.

It is found in the cell inner membrane. Its function is as follows. Part of the binding-protein-dependent transport system for molybdenum; probably responsible for the translocation of the substrate across the membrane. The chain is Molybdenum transport system permease protein ModB (modB) from Escherichia coli O157:H7.